A 240-amino-acid polypeptide reads, in one-letter code: Transcriptional regulatory protein ResD (240 aa).

The Response regulatory domain maps to 8–121 (KILVVDDEAR…EVVLRVKALL (114 aa)). The residue at position 57 (aspartate 57) is a 4-aspartylphosphate. The segment at residues 137–237 (KNVLVFSHLS…VWGVGYKFEV (101 aa)) is a DNA-binding region (ompR/PhoB-type).

In terms of assembly, interacts with the RNA polymerase core. Post-translationally, phosphorylated by ResE.

The protein localises to the cytoplasm. Functionally, member of the two-component regulatory system ResD/ResE. Required for the expression of resA, ctaA, qcrABC and fnr; activation role in global regulation of aerobic and anaerobic respiration. The sequence is that of Transcriptional regulatory protein ResD (resD) from Bacillus subtilis (strain 168).